The primary structure comprises 227 residues: Uracil-DNA glycosylase (227 aa).

Residue Asp68 is the Proton acceptor of the active site.

It belongs to the uracil-DNA glycosylase (UDG) superfamily. UNG family.

The protein resides in the cytoplasm. The enzyme catalyses Hydrolyzes single-stranded DNA or mismatched double-stranded DNA and polynucleotides, releasing free uracil.. In terms of biological role, excises uracil residues from the DNA which can arise as a result of misincorporation of dUMP residues by DNA polymerase or due to deamination of cytosine. This chain is Uracil-DNA glycosylase, found in Mycobacterium sp. (strain JLS).